A 426-amino-acid polypeptide reads, in one-letter code: Serine hydroxymethyltransferase (426 aa).

Residues Leu-115 and Gly-119–Ile-121 each bind (6S)-5,6,7,8-tetrahydrofolate. N6-(pyridoxal phosphate)lysine is present on Lys-225.

Belongs to the SHMT family. In terms of assembly, homodimer. Requires pyridoxal 5'-phosphate as cofactor.

The protein resides in the cytoplasm. The protein operates within amino-acid biosynthesis; glycine biosynthesis; glycine from L-serine: step 1/1. Its function is as follows. Catalyzes the reversible interconversion of serine and glycine with a modified folate serving as the one-carbon carrier. Also exhibits a pteridine-independent aldolase activity toward beta-hydroxyamino acids, producing glycine and aldehydes, via a retro-aldol mechanism. This is Serine hydroxymethyltransferase from Thermoplasma acidophilum (strain ATCC 25905 / DSM 1728 / JCM 9062 / NBRC 15155 / AMRC-C165).